A 335-amino-acid chain; its full sequence is Ferrochelatase (335 aa).

Fe cation-binding residues include histidine 207 and glutamate 288.

This sequence belongs to the ferrochelatase family.

It is found in the cytoplasm. It carries out the reaction heme b + 2 H(+) = protoporphyrin IX + Fe(2+). It participates in porphyrin-containing compound metabolism; protoheme biosynthesis; protoheme from protoporphyrin-IX: step 1/1. Catalyzes the ferrous insertion into protoporphyrin IX. This chain is Ferrochelatase, found in Helicobacter pylori (strain G27).